Reading from the N-terminus, the 720-residue chain is DNA ligase (720 aa).

Residues 57–61 (DAEYD), 106–107 (SL), and Glu-140 contribute to the NAD(+) site. The N6-AMP-lysine intermediate role is filled by Lys-142. NAD(+)-binding residues include Arg-163, Glu-200, Lys-316, and Lys-340. Positions 434, 437, 458, and 464 each coordinate Zn(2+). The BRCT domain occupies 643 to 720 (AAASPVSGKT…TEDEWFELVG (78 aa)).

This sequence belongs to the NAD-dependent DNA ligase family. LigA subfamily. It depends on Mg(2+) as a cofactor. Requires Mn(2+) as cofactor.

The enzyme catalyses NAD(+) + (deoxyribonucleotide)n-3'-hydroxyl + 5'-phospho-(deoxyribonucleotide)m = (deoxyribonucleotide)n+m + AMP + beta-nicotinamide D-nucleotide.. In terms of biological role, DNA ligase that catalyzes the formation of phosphodiester linkages between 5'-phosphoryl and 3'-hydroxyl groups in double-stranded DNA using NAD as a coenzyme and as the energy source for the reaction. It is essential for DNA replication and repair of damaged DNA. The sequence is that of DNA ligase from Xanthobacter autotrophicus (strain ATCC BAA-1158 / Py2).